The following is a 1010-amino-acid chain: Translation initiation factor IF-2 (1010 aa).

Disordered stretches follow at residues 54 to 350 (KGLA…FEDD) and 364 to 420 (PSFT…RPES). Polar residues predominate over residues 57–70 (ASSTSKNSTGQRES). The span at 112–124 (ISPPRPPVKPLVA) shows a compositional bias: pro residues. Polar residues predominate over residues 145–155 (HSPSVKETPTE). Residues 200 to 258 (DRPRGEKRERGESENAPSPERRVGLAKPEKPTLNRKPDGKSPKLAEPAREVRETVELKR) show a composition bias toward basic and acidic residues. Residues 378–389 (TAKAAPPGTPTA) are compositionally biased toward low complexity. Positions 406–419 (KSERQEPQEEKRPE) are enriched in basic and acidic residues. One can recognise a tr-type G domain in the interval 502–675 (RRPPVVTIMG…LLVAEVEELV (174 aa)). The tract at residues 511-518 (GHVDHGKT) is G1. 511–518 (GHVDHGKT) lines the GTP pocket. The interval 536–540 (GITQH) is G2. A G3 region spans residues 561–564 (DTPG). Residues 561-565 (DTPGH) and 615-618 (NKVD) each bind GTP. The G4 stretch occupies residues 615-618 (NKVD). The G5 stretch occupies residues 651-653 (SAL).

Belongs to the TRAFAC class translation factor GTPase superfamily. Classic translation factor GTPase family. IF-2 subfamily.

It localises to the cytoplasm. Its function is as follows. One of the essential components for the initiation of protein synthesis. Protects formylmethionyl-tRNA from spontaneous hydrolysis and promotes its binding to the 30S ribosomal subunits. Also involved in the hydrolysis of GTP during the formation of the 70S ribosomal complex. This Microcystis aeruginosa (strain NIES-843 / IAM M-2473) protein is Translation initiation factor IF-2.